Consider the following 252-residue polypeptide: Imidazole glycerol phosphate synthase subunit HisF (252 aa).

Active-site residues include D13 and D132.

Belongs to the HisA/HisF family. As to quaternary structure, heterodimer of HisH and HisF.

It is found in the cytoplasm. The catalysed reaction is 5-[(5-phospho-1-deoxy-D-ribulos-1-ylimino)methylamino]-1-(5-phospho-beta-D-ribosyl)imidazole-4-carboxamide + L-glutamine = D-erythro-1-(imidazol-4-yl)glycerol 3-phosphate + 5-amino-1-(5-phospho-beta-D-ribosyl)imidazole-4-carboxamide + L-glutamate + H(+). It functions in the pathway amino-acid biosynthesis; L-histidine biosynthesis; L-histidine from 5-phospho-alpha-D-ribose 1-diphosphate: step 5/9. In terms of biological role, IGPS catalyzes the conversion of PRFAR and glutamine to IGP, AICAR and glutamate. The HisF subunit catalyzes the cyclization activity that produces IGP and AICAR from PRFAR using the ammonia provided by the HisH subunit. The protein is Imidazole glycerol phosphate synthase subunit HisF of Campylobacter curvus (strain 525.92).